The following is a 460-amino-acid chain: Rab-3A-interacting protein (460 aa).

Serine 147, serine 149, serine 247, serine 250, serine 272, and serine 280 each carry phosphoserine. Residues 149 to 244 (SVLEVREKGY…EVAALKTLVL (96 aa)) are a coiled coil. Residues 246–280 (SSPTSPTQEPLAAGKTPFKRGHTRNKSTSSAMSGS) are disordered. The span at 271 to 280 (KSTSSAMSGS) shows a compositional bias: polar residues.

Belongs to the SEC2 family. Homodimer. Interacts with the N-terminal region of SSX2. Interacts with the GDP-bound forms of RAB8A and RAB8B. The interaction with RAB8A is prevented by phosphorylation of RAB8A at 'Thr-72'. Interacts with the GDP-bound forms of RAB3A and RAB3D. Interacts with DCDC1. Interacts (via the N-terminal region) with TRAPPC14; this interaction mediates RAB3IP association with the TRAPP II complex. Forms a heterotetramer with RAB11A where RAB3IP homodimer binds two RAB11A subunits. Forms a complex with RAB11A and RAB11FIP3, probably a heterohexamer with two of each protein subunit, where Rabin8/RAB3IP and RAB11FIP3 simultaneously bind to RAB11A; the complex promotes preciliary trafficking. Forms a complex containing RAB11A, ASAP1, RAB3IP, RAP11FIP3 and ARF4; the complex promotes preciliary trafficking; the complex binds to RHO in photoreceptor cells and promotes RHO ciliary transport. As to expression, ubiquitously expressed. Expressed at highest level in testis.

It is found in the cytoplasm. The protein resides in the nucleus. Its subcellular location is the cytoskeleton. It localises to the cell projection. The protein localises to the lamellipodium. In terms of biological role, guanine nucleotide exchange factor (GEF) which may activate RAB8A and RAB8B. Promotes the exchange of GDP to GTP, converting inactive GDP-bound Rab proteins into their active GTP-bound form. Mediates the release of GDP from RAB8A and RAB8B but not from RAB3A or RAB5. Modulates actin organization and promotes polarized transport of RAB8A-specific vesicles to the cell surface. Together with RAB11A, RAB8A, the exocyst complex, PARD3, PRKCI, ANXA2, CDC42 and DNMBP promotes transcytosis of PODXL to the apical membrane initiation sites (AMIS), apical surface formation and lumenogenesis. Together with RAB11A and FIP3/RAB11FIP3, parts of the ciliary targeting complex that promotes preciliary vesicle trafficking to mother centriole and ciliogenesis initiation. Part of the ciliary targeting complex containing Rab11, ASAP1, RAB3IP and RAB11FIP3 and ARF4 that promotes RAB3IP preciliary vesicle trafficking to mother centriole and ciliogenesis initiation. In Rattus norvegicus (Rat), this protein is Rab-3A-interacting protein (Rab3ip).